Reading from the N-terminus, the 478-residue chain is Cysteine--tRNA ligase (478 aa).

Residue Cys-29 coordinates Zn(2+). A 'HIGH' region motif is present at residues Val-31–His-41. Residues Cys-213, His-238, and Glu-242 each contribute to the Zn(2+) site. The short motif at Lys-270–Ser-274 is the 'KMSKS' region element. Lys-273 lines the ATP pocket.

Belongs to the class-I aminoacyl-tRNA synthetase family. As to quaternary structure, monomer. The cofactor is Zn(2+).

The protein localises to the cytoplasm. It carries out the reaction tRNA(Cys) + L-cysteine + ATP = L-cysteinyl-tRNA(Cys) + AMP + diphosphate. This Synechococcus sp. (strain ATCC 27144 / PCC 6301 / SAUG 1402/1) (Anacystis nidulans) protein is Cysteine--tRNA ligase.